Here is a 1637-residue protein sequence, read N- to C-terminus: MEGFEASGEEGKKKSKFKAFKNFFSKKKKKEPEEIPEVAVLKPRFSSSSVSGSSLQPALEKQVMESKPKSGMGVKSISHDSVFCLDPEPEKGAGKLHSSPAPHRSKSLKIKSQRSQRLSISPLIRSEKVCEELEKFFASDRTTTTFRRRSSQCSSTPRMSSELSLDPETSESSTQQFSGFSTPATSQGCLDSSAAKSKIALNPRKQKKRKSTSTPVKVKQEEQLQSVPAKEKTTTKTKEAEQGEQKVDSTELSSQEQSSKTETQDTAVDKTPSTDPALRLNPRRRRRRAKNEWEILERGLLKSTQRYSLNTKAESSANKEIAGKEHSFLKLLLEKKDIGQPTTTEAEVTTVQKMPSDKGDVERELADIDVEAQKEPAPQPTSTDVAESMISGPSPHCEDKKKKDKVGVLPWIKKSTSQKEVTVLRKEEVQVHVHPSRVCGEGEEASCPELQRVQPQMKVSLESTTYHKEKHPRSGLPVPSTSISSATAEDDVSPKMNLPLPLRRRPNTGETSSDSKSTSEYESSSEMQLSPAHSFKPTRKPKDDAGAGTADDEEDGDDEKEEKDNDDDDEENVFLKSENVDVEVSKMEKQQALRYSSKLLGKPKAREASAKLESSSEDERSCEEMTSAHSSQSLEEFEECSESRGFIRGSISEERPATRCHSQALQELEEKEVSTESSSYIEKYESSEDLSSSEQEQQVPPVSKSSLKQWSAPAKPVHPIQTAQQQPPAMVNISGGPKKSGEPLSPTQTVKSRLRSQSECQVLAEPEGVVAADWDILMQPPPRPRLEQEVSAGPELTVFEKSIAVQPSGYPPQPSVKPSIKKEISLGAESAPLESPPPQHHFQPLLKPFVKQQVSAFERVISMDPKLPTQFQPRMKPQGKQSFSSTPESTAFEGSTSVDHMTLTLSQPMLQPYQEVPLESETVAAKMISTGQLHSKYSAHPLSSHQSQPVPESTSAEGEELLPSQPSVTPKFQPLMTQGSIPSAWAIPIYSPAPRMDSKPLMGSAIALESKPSRYSLQPWQSTPFEQVSVTPDHDPAAAAASWSPPIDPPTSRIPSQPLMRLAVKQPTCTELASVSVSQSSSLERLSSRFPFQPRADPEHYGAEEGVATLRRSRRHHSQSPVRSEFKEEVSSGSRRAFGERSISVGKMPPKYALQPWLCPEFQQQAKEGDVLRKAWLSGHPSQTISKHKVEKTPLPPKCPSPFLTRSKVQEISSRLESVIAQESSKKPQRGRPPSKSFVNFMAQQVFSESAPSKVVLHPKPVARGRRRPSRSLLKPKLDDYAFLYNWDNEPKEDTTLQNLPMKQPFQLSRKPEEPQEVLPFSEGAPVKWNTSARGISQALGKLSVSVSLPNEWKSSEGQLPSTQPSQAFDVAKLQSPVLPVDSANVPVKWRISEGHQPPQSFFVDYQPQVSVDSASAAAKGASCWPMLKDSASTTNVKYSQGYKDFTKSTPTSVIKPATFTSAPAQKPMVSMGTYFKDEVPKCCDETGTSSLLPTSKADVENVFGVRLRSTSQKIGMKNPDPCKPFVLISAAARKEQANKGDLQGSVGGSKQSRPAFSFEKKQGNWPRYEGTLKKSEVFRPPVAFYDQKMLHPRTRERLTRRSLSLPPTLPQREEPEWFSVAKKKAQAWSQIANIMQ.

10 disordered regions span residues 44-121, 141-293, 341-404, 438-759, 865-896, 935-975, 1017-1057, 1090-1137, 1182-1238, and 1539-1558; these read RFSS…LSIS, RTTT…KNEW, PTTT…KKKD, VCGE…SQSE, PKLP…EGST, SKYS…FQPL, LQPW…IPSQ, FPFQ…SRRA, SQTI…SKSF, and NKGD…PAFS. Residues 103-114 are compositionally biased toward basic residues; it reads HRSKSLKIKSQR. Residues 141-156 are compositionally biased toward low complexity; that stretch reads RTTTTFRRRSSQCSST. The span at 170 to 190 shows a compositional bias: polar residues; the sequence is SESSTQQFSGFSTPATSQGCL. The segment covering 229–249 has biased composition (basic and acidic residues); sequence AKEKTTTKTKEAEQGEQKVDS. Over residues 250–261 the composition is skewed to low complexity; sequence TELSSQEQSSKT. Over residues 341 to 353 the composition is skewed to polar residues; the sequence is PTTTEAEVTTVQK. Basic and acidic residues predominate over residues 355–374; it reads PSDKGDVERELADIDVEAQK. Over residues 508-526 the composition is skewed to low complexity; the sequence is TGETSSDSKSTSEYESSSE. Residues 550 to 572 are compositionally biased toward acidic residues; the sequence is ADDEEDGDDEKEEKDNDDDDEEN. Low complexity predominate over residues 689–698; it reads DLSSSEQEQQ. 5 stretches are compositionally biased toward polar residues: residues 745 to 759, 879 to 896, 935 to 956, 964 to 975, and 1017 to 1030; these read SPTQ…SQSE, GKQS…EGST, SKYS…STSA, SQPSVTPKFQPL, and LQPW…QVSV.

As to quaternary structure, interacts with TOP2B. In terms of tissue distribution, predominantly expressed in testis (at protein level).

The protein localises to the cytoplasmic vesicle. It localises to the secretory vesicle. Its subcellular location is the acrosome. The protein is Acrosomal protein KIAA1210 of Mus musculus (Mouse).